The following is an 885-amino-acid chain: MSSLFQPRPVLSSQRYSQSPDYVDTRRSIHNGRLPLRESTGNAQSHSFNGLVSCYQNQVALAPSMQTTIPAPMVPSQSLDCLYRVPTPRQQARFQRRPKTSVNPLYFWPAFRQYRNRQAHKDTQKDKGGVWRRPELEDAFVDSVLLMPHMGRRKFSMGGKLHGRNMLISEYIFVICIALLGSKEIFRIDNSNESIEQMGRKQVSSHMQVVKKFFEDLRCFHFLFPSEEKKEPGSTNSDDCYDEEEQESFKSNPVLTALAEGRVPDVKPNYEYFSQLLALQSSICTRPKTCEIFVSSSDIKIRDDVAYDVHDTPLDQASFPHLNKYTNCDDSPNVLGKDVLLHEYTRSLDRTTSACAKSVTRRWQHDAPAMYETLELPSRDEECLLLEMCATLELHEHAKFPSGSELTGFVEVAITQPALQNHRWKCITRLTRPAELHSDEGKHGVYTNDSGIHRRGCSDSKAECECHTRPRQDIHVPFPAVEWASILSMAVQYPDVEHQRLKEKRRKYADGDGKKELERAGSKRKRSEDEGDAASWTRREPTGSDLICKVAMYQELWSCAPDSTQWTRQAIIFWRFNTTNQWHKYNPVFKPAGTTWRWLTINDPMSRYHQQKALVYPTANVSRDALMSPTPTIHQHLTAAMNETFNSWDQGSSAPHVPHVPPLQTPNNSIGLFDSFSNGLATPPPTATLPPAYPTGNFDSRSGSFDARSASFDTRSGSFDGNLGPNNGVAFLPTTGPPPQHERQPTALGNNNQPFFDGQQSFSEVKPINTAVNSYMTASTSLELPNQLVYDNSGVDTSNMQGWDMSALDGWSAAASAPGSATAEWGPNTKVESHAGDHHGAMWAPPHWPLSAGAAPSSHERGASPRPLKRRRETMDVHVPVTAGW.

Over residues 1-20 the composition is skewed to polar residues; that stretch reads MSSLFQPRPVLSSQRYSQSP. The tract at residues 1-25 is disordered; the sequence is MSSLFQPRPVLSSQRYSQSPDYVDT. Positions 124-217 form a DNA-binding region, TEA; sequence QKDKGGVWRR…QVVKKFFEDL (94 aa). Disordered regions lie at residues 502-539 and 817-885; these read KEKRRKYADGDGKKELERAGSKRKRSEDEGDAASWTRR and APGS…TAGW. Basic and acidic residues-rich tracts occupy residues 508–521 and 831–840; these read YADGDGKKELERAG and VESHAGDHHG.

It belongs to the TEC1 family.

It is found in the nucleus. BrlA, abaA and wetA are pivotal regulators of conidiophore development and conidium maturation. They act individually and together to regulate their own expression and that of numerous other sporulation-specific genes. BrlA, abaA and wetA act together to positively regulate the expression of the Pks1 gene cluster that mediates the biosynthesis of an anthraquinone derivative pigment that contributes to conidial pigmentation that provides protection from UV radiation, heat and cold stress. The protein is Conidiophore development regulator abaA of Metarhizium robertsii (strain ARSEF 23 / ATCC MYA-3075) (Metarhizium anisopliae (strain ARSEF 23)).